A 630-amino-acid polypeptide reads, in one-letter code: Ubiquitin-like modifier-activating enzyme ATG7 (630 aa).

Positions Gly-331 to Gly-336 match the GXGXXG motif motif. Cys-507 functions as the Glycyl thioester intermediate in the catalytic mechanism. Positions Ala-591–Ala-630 are homodimerization.

It belongs to the ATG7 family. As to quaternary structure, homodimer; homodimerization is required for ATP-binding. Interacts with ATG8 through a thioester bond between Cys-507 and the C-terminal 'Gly-116' of ATG8 and with ATG12 through a thioester bond between Cys-507 and the C-terminal 'Gly-186' of ATG12. Also interacts with ATG3.

The protein localises to the cytoplasm. It localises to the preautophagosomal structure. In terms of biological role, E1-like activating enzyme involved in the 2 ubiquitin-like systems required for cytoplasm to vacuole transport (Cvt) and autophagy. Activates ATG12 for its conjugation with ATG5 and ATG8 for its conjugation with phosphatidylethanolamine. Both systems are needed for the ATG8 association to Cvt vesicles and autophagosomes membranes. Autophagy is essential for maintenance of amino acid levels and protein synthesis under nitrogen starvation. Required for selective autophagic degradation of the nucleus (nucleophagy) as well as for mitophagy which contributes to regulate mitochondrial quantity and quality by eliminating the mitochondria to a basal level to fulfill cellular energy requirements and preventing excess ROS production. Plays a role in the regulation of filamentous growth and chronological longevity. The protein is Ubiquitin-like modifier-activating enzyme ATG7 (ATG7) of Saccharomyces cerevisiae (strain ATCC 204508 / S288c) (Baker's yeast).